Reading from the N-terminus, the 491-residue chain is Protein nucleotidyltransferase YdiU (491 aa).

The ATP site is built by Gly94, Gly96, Arg97, Lys117, Asp129, Gly130, Arg180, and Arg187. The active-site Proton acceptor is Asp256. Mg(2+)-binding residues include Asn257 and Asp266. Asp266 lines the ATP pocket.

Belongs to the SELO family. It depends on Mg(2+) as a cofactor. Requires Mn(2+) as cofactor.

The catalysed reaction is L-seryl-[protein] + ATP = 3-O-(5'-adenylyl)-L-seryl-[protein] + diphosphate. It carries out the reaction L-threonyl-[protein] + ATP = 3-O-(5'-adenylyl)-L-threonyl-[protein] + diphosphate. It catalyses the reaction L-tyrosyl-[protein] + ATP = O-(5'-adenylyl)-L-tyrosyl-[protein] + diphosphate. The enzyme catalyses L-histidyl-[protein] + UTP = N(tele)-(5'-uridylyl)-L-histidyl-[protein] + diphosphate. The catalysed reaction is L-seryl-[protein] + UTP = O-(5'-uridylyl)-L-seryl-[protein] + diphosphate. It carries out the reaction L-tyrosyl-[protein] + UTP = O-(5'-uridylyl)-L-tyrosyl-[protein] + diphosphate. In terms of biological role, nucleotidyltransferase involved in the post-translational modification of proteins. It can catalyze the addition of adenosine monophosphate (AMP) or uridine monophosphate (UMP) to a protein, resulting in modifications known as AMPylation and UMPylation. The chain is Protein nucleotidyltransferase YdiU from Clostridium botulinum (strain Eklund 17B / Type B).